Consider the following 263-residue polypeptide: uncharacterized protein (263 aa).

Residue 31–38 (GPTGSGKT) participates in ATP binding.

This sequence belongs to the CbbQ/NirQ/NorQ/GpvN family.

This is an uncharacterized protein from Staphylococcus haemolyticus (strain JCSC1435).